Reading from the N-terminus, the 138-residue chain is Type II secretion system protein I (138 aa).

Positions 1 to 6 are cleaved as a propeptide — leader sequence; it reads MKHQRG. The residue at position 7 (Tyr7) is an N-methyltyrosine. The helical transmembrane segment at 7–29 threads the bilayer; sequence YSLIEVIVAFALLALALTLLLGS.

It belongs to the GSP I family. In terms of assembly, type II secretion is composed of four main components: the outer membrane complex, the inner membrane complex, the cytoplasmic secretion ATPase and the periplasm-spanning pseudopilus. Interacts with core component XpsG. Post-translationally, cleaved by prepilin peptidase. Methylated by prepilin peptidase at the amino group of the N-terminal tyrosine once the leader sequence is cleaved by prepilin peptidase.

The protein resides in the cell inner membrane. Component of the type II secretion system required for the energy-dependent secretion of extracellular factors such as proteases and toxins from the periplasm. Part of the pseudopilus tip complex that is critical for the recognition and binding of secretion substrates. In Xanthomonas campestris pv. campestris (strain ATCC 33913 / DSM 3586 / NCPPB 528 / LMG 568 / P 25), this protein is Type II secretion system protein I (xpsI).